Consider the following 301-residue polypeptide: CRISPR-associated endonuclease Cas1 (301 aa).

Residues Glu133, His200, and Asp213 each coordinate Mn(2+).

It belongs to the CRISPR-associated endonuclease Cas1 family. As to quaternary structure, homodimer, forms a heterotetramer with a Cas2 homodimer. It depends on Mg(2+) as a cofactor. Mn(2+) serves as cofactor.

Its function is as follows. CRISPR (clustered regularly interspaced short palindromic repeat), is an adaptive immune system that provides protection against mobile genetic elements (viruses, transposable elements and conjugative plasmids). CRISPR clusters contain spacers, sequences complementary to antecedent mobile elements, and target invading nucleic acids. CRISPR clusters are transcribed and processed into CRISPR RNA (crRNA). Acts as a dsDNA endonuclease. Involved in the integration of spacer DNA into the CRISPR cassette. In Clostridium sp. (strain SY8519), this protein is CRISPR-associated endonuclease Cas1.